We begin with the raw amino-acid sequence, 255 residues long: MSLMFGKARTCNIVTVPEHEPSEVNIVILGAMGSGKSALTVKFLTKRFISEYDPNLEDTYSSEEVVDQQPVLVKVMDTADQEGPVNGERYLGWANAFIIVYSIDNRSSFEVCQQYLETVSLYSKGLQPEAPVILLGNKVDMERYRQVSKADGAALALRFGCLFFEVSACLDFLSVQHIFHEAVREVRRETERSIRPLFISEDKSAISLSSAPPLTACYKELPTPATAKLVTVKSSRAQSKRRAPTLTLLKGFKIF.

GTP contacts are provided by residues 30-37 (GAMGSGKS), 77-81 (DTADQ), and 137-140 (NKVD).

This sequence belongs to the small GTPase superfamily. Ras family.

It carries out the reaction GTP + H2O = GDP + phosphate + H(+). The chain is Ras-like protein family member 12 (RASL12) from Danio rerio (Zebrafish).